The chain runs to 73 residues: NAD(P)H-quinone oxidoreductase subunit L (73 aa).

2 helical membrane-spanning segments follow: residues 6 to 26 and 44 to 64; these read SLIG…LPLL and VLMF…APFM.

This sequence belongs to the complex I NdhL subunit family. As to quaternary structure, NDH-1 can be composed of about 15 different subunits; different subcomplexes with different compositions have been identified which probably have different functions.

It is found in the cellular thylakoid membrane. The enzyme catalyses a plastoquinone + NADH + (n+1) H(+)(in) = a plastoquinol + NAD(+) + n H(+)(out). It catalyses the reaction a plastoquinone + NADPH + (n+1) H(+)(in) = a plastoquinol + NADP(+) + n H(+)(out). NDH-1 shuttles electrons from an unknown electron donor, via FMN and iron-sulfur (Fe-S) centers, to quinones in the respiratory and/or the photosynthetic chain. The immediate electron acceptor for the enzyme in this species is believed to be plastoquinone. Couples the redox reaction to proton translocation, and thus conserves the redox energy in a proton gradient. Cyanobacterial NDH-1 also plays a role in inorganic carbon-concentration. This chain is NAD(P)H-quinone oxidoreductase subunit L, found in Synechococcus sp. (strain JA-2-3B'a(2-13)) (Cyanobacteria bacterium Yellowstone B-Prime).